The following is a 532-amino-acid chain: Protoporphyrinogen oxidase (532 aa).

FAD-binding positions include 9–14 (GSGISG), I289, and 511–513 (VGI).

Belongs to the protoporphyrinogen/coproporphyrinogen oxidase family. Protoporphyrinogen oxidase subfamily. The cofactor is FAD.

It is found in the mitochondrion. The enzyme catalyses protoporphyrinogen IX + 3 O2 = protoporphyrin IX + 3 H2O2. Its pathway is porphyrin-containing compound metabolism; protoporphyrin-IX biosynthesis; protoporphyrin-IX from protoporphyrinogen-IX: step 1/1. In terms of biological role, catalyzes the 6-electron oxidation of protoporphyrinogen-IX to form protoporphyrin-IX. This is Protoporphyrinogen oxidase (ppox) from Dictyostelium discoideum (Social amoeba).